The following is a 209-amino-acid chain: MVKSPLKALVISLVFLFVLGFLFPTVTSLITEKALPNQSEGQPIKIDGKVYGSYLLAEAFNSSIFFHPRPSAIGYNLSESGSYPYSLGNPEVLNLTEKYLDEFLKDNPGINASQIPYAMLSYSASGLDPNIPLQGALIQIPRISIALHSITNNSVSLWENYLNDLVNKYTTQNFPFFGSYYVNIMYLNVNILEYLMNNGYIKSLNSIPP.

Residues 10–30 traverse the membrane as a helical segment; that stretch reads VISLVFLFVLGFLFPTVTSLI.

This sequence belongs to the KdpC family. As to quaternary structure, the system is composed of three essential subunits: KdpA, KdpB and KdpC.

It is found in the cell membrane. In terms of biological role, part of the high-affinity ATP-driven potassium transport (or Kdp) system, which catalyzes the hydrolysis of ATP coupled with the electrogenic transport of potassium into the cytoplasm. This subunit acts as a catalytic chaperone that increases the ATP-binding affinity of the ATP-hydrolyzing subunit KdpB by the formation of a transient KdpB/KdpC/ATP ternary complex. The polypeptide is Potassium-transporting ATPase KdpC subunit (Thermoplasma volcanium (strain ATCC 51530 / DSM 4299 / JCM 9571 / NBRC 15438 / GSS1)).